Here is a 758-residue protein sequence, read N- to C-terminus: 5-methyltetrahydropteroyltriglutamate--homocysteine methyltransferase (758 aa).

Residues 16-19 (RELK) and lysine 116 contribute to the 5-methyltetrahydropteroyltri-L-glutamate site. Residues 436-438 (IGS) and glutamate 489 each bind L-homocysteine. Residues 436–438 (IGS) and glutamate 489 contribute to the L-methionine site. Residues 520 to 521 (RC) and tryptophan 566 contribute to the 5-methyltetrahydropteroyltri-L-glutamate site. Position 604 (aspartate 604) interacts with L-homocysteine. Aspartate 604 is a binding site for L-methionine. 5-methyltetrahydropteroyltri-L-glutamate is bound at residue glutamate 610. 3 residues coordinate Zn(2+): histidine 646, cysteine 648, and glutamate 670. Residue histidine 699 is the Proton donor of the active site. Residue cysteine 731 participates in Zn(2+) binding.

Belongs to the vitamin-B12 independent methionine synthase family. Zn(2+) is required as a cofactor.

The catalysed reaction is 5-methyltetrahydropteroyltri-L-glutamate + L-homocysteine = tetrahydropteroyltri-L-glutamate + L-methionine. It participates in amino-acid biosynthesis; L-methionine biosynthesis via de novo pathway; L-methionine from L-homocysteine (MetE route): step 1/1. Catalyzes the transfer of a methyl group from 5-methyltetrahydrofolate to homocysteine resulting in methionine formation. This is 5-methyltetrahydropteroyltriglutamate--homocysteine methyltransferase from Xylella fastidiosa (strain M23).